We begin with the raw amino-acid sequence, 50 residues long: Large ribosomal subunit protein bL33B (50 aa).

It belongs to the bacterial ribosomal protein bL33 family.

This Streptococcus pyogenes serotype M1 protein is Large ribosomal subunit protein bL33B.